Consider the following 176-residue polypeptide: Peptide methionine sulfoxide reductase MsrA (176 aa).

Cys12 is a catalytic residue.

The protein belongs to the MsrA Met sulfoxide reductase family.

It catalyses the reaction L-methionyl-[protein] + [thioredoxin]-disulfide + H2O = L-methionyl-(S)-S-oxide-[protein] + [thioredoxin]-dithiol. It carries out the reaction [thioredoxin]-disulfide + L-methionine + H2O = L-methionine (S)-S-oxide + [thioredoxin]-dithiol. Functionally, has an important function as a repair enzyme for proteins that have been inactivated by oxidation. Catalyzes the reversible oxidation-reduction of methionine sulfoxide in proteins to methionine. This Thermus thermophilus (strain ATCC BAA-163 / DSM 7039 / HB27) protein is Peptide methionine sulfoxide reductase MsrA.